Reading from the N-terminus, the 38-residue chain is Photosystem II reaction center protein L (38 aa).

Residues 17 to 37 (SLYWGLLLIFVLAVLFSNYFF) traverse the membrane as a helical segment.

The protein belongs to the PsbL family. PSII is composed of 1 copy each of membrane proteins PsbA, PsbB, PsbC, PsbD, PsbE, PsbF, PsbH, PsbI, PsbJ, PsbK, PsbL, PsbM, PsbT, PsbX, PsbY, PsbZ, Psb30/Ycf12, at least 3 peripheral proteins of the oxygen-evolving complex and a large number of cofactors. It forms dimeric complexes.

Its subcellular location is the plastid. It localises to the chloroplast thylakoid membrane. One of the components of the core complex of photosystem II (PSII). PSII is a light-driven water:plastoquinone oxidoreductase that uses light energy to abstract electrons from H(2)O, generating O(2) and a proton gradient subsequently used for ATP formation. It consists of a core antenna complex that captures photons, and an electron transfer chain that converts photonic excitation into a charge separation. This subunit is found at the monomer-monomer interface and is required for correct PSII assembly and/or dimerization. The polypeptide is Photosystem II reaction center protein L (Oenothera argillicola (Appalachian evening primrose)).